Reading from the N-terminus, the 618-residue chain is D-glucuronyl C5-epimerase (618 aa).

Residues Met-1–Lys-11 lie on the Cytoplasmic side of the membrane. A helical; Signal-anchor for type II membrane protein transmembrane segment spans residues Thr-12–Asn-29. Over Lys-30 to Asn-618 the chain is Lumenal. Residues Tyr-180, Arg-185 to Arg-187, Gln-202, Tyr-210, Gln-213, and Gln-216 contribute to the substrate site. 5 residues coordinate Ca(2+): Thr-238, Glu-240, Thr-269, Asn-270, and Asp-393. Substrate-binding positions include Lys-430–Glu-433, Glu-500–Tyr-501, Asn-511, Tyr-515, Tyr-561, Arg-564, and Asn-573–Thr-582.

Belongs to the D-glucuronyl C5-epimerase family. As to quaternary structure, homodimer. Interacts with HS2ST1. Widely expressed with highest levels in lung and lowest levels in spleen.

The protein localises to the golgi apparatus membrane. It carries out the reaction [heparosan-N-sulfate](n) = [heparan-N-sulfate](n). Its pathway is glycan metabolism; heparan sulfate biosynthesis. It participates in glycan metabolism; heparin biosynthesis. Converts D-glucuronic acid residues adjacent to N-sulfate sugar residues to L-iduronic acid residues, both in maturing heparan sulfate (HS) and heparin chains. This is important for further modifications that determine the specificity of interactions between these glycosaminoglycans and proteins. This Mus musculus (Mouse) protein is D-glucuronyl C5-epimerase (Glce).